Here is a 534-residue protein sequence, read N- to C-terminus: MSDVSNEAARRRTFAIISHPDAGKTTLTEKLLLFGGAIQMAGSVKGRKAARHATSDWMALEKERGISVTSSVMQFPYEGKIVNLLDTPGHADFGEDTYRVLTAVDSALMVIDVAKGVEERTIKLMEVCRLRDTPIMTFINKLDREGKNPIDLLDEVETVLGIQCAPVTWPIGMGQRLKGVVHLISGEVHLYEQGRNFTRQDSTIFPSLDAPGLAEKIGEQMLTELRDELELVQGASNPFDLDAYRAGQQTPVFFGSGVNNFGVQPLLDFFIEHAPPPQTRETTGRRVAPSETKLSGFVFKIQANMDPQHRDRVAFMRVCSGKFTAGMKTLHVRSGKDVKLANALTFMASDREIAAEAWPGDVIGIHNHGTISIGDTFTEGESLSFTGIPNFAPELFRRARLRDPLKLKQLQKGLAQLSEEGATQFFRPLMSNDLILGAVGVLQFDVVAYRLKDEYGVDAIFEPVSVTTARWVHCDNVKKLDEFREKNAGNLGIDAAGQLVYLAPTRVNLQLAQERAPDVRFSATREHVHAKAID.

Residues 9-278 (ARRRTFAIIS…FFIEHAPPPQ (270 aa)) form the tr-type G domain. Residues 18–25 (SHPDAGKT), 86–90 (DTPGH), and 140–143 (NKLD) each bind GTP.

It belongs to the TRAFAC class translation factor GTPase superfamily. Classic translation factor GTPase family. PrfC subfamily.

The protein localises to the cytoplasm. Functionally, increases the formation of ribosomal termination complexes and stimulates activities of RF-1 and RF-2. It binds guanine nucleotides and has strong preference for UGA stop codons. It may interact directly with the ribosome. The stimulation of RF-1 and RF-2 is significantly reduced by GTP and GDP, but not by GMP. The chain is Peptide chain release factor 3 from Xanthomonas oryzae pv. oryzae (strain PXO99A).